The chain runs to 98 residues: Large ribosomal subunit protein uL23 (98 aa).

The protein belongs to the universal ribosomal protein uL23 family. As to quaternary structure, part of the 50S ribosomal subunit. Contacts protein L29, and trigger factor when it is bound to the ribosome.

One of the early assembly proteins it binds 23S rRNA. One of the proteins that surrounds the polypeptide exit tunnel on the outside of the ribosome. Forms the main docking site for trigger factor binding to the ribosome. The sequence is that of Large ribosomal subunit protein uL23 from Dinoroseobacter shibae (strain DSM 16493 / NCIMB 14021 / DFL 12).